Reading from the N-terminus, the 352-residue chain is Maleylacetate reductase (352 aa).

The protein belongs to the iron-containing alcohol dehydrogenase family.

The enzyme catalyses 3-oxoadipate + NAD(+) = maleylacetate + NADH + H(+). It catalyses the reaction 3-oxoadipate + NADP(+) = maleylacetate + NADPH + H(+). Its pathway is aromatic compound metabolism; 3-chlorocatechol degradation. The chain is Maleylacetate reductase (clcE) from Pseudomonas aeruginosa.